Here is a 475-residue protein sequence, read N- to C-terminus: Retrotransposon Gag-like protein 3 (475 aa).

Composition is skewed to basic and acidic residues over residues 51-66 (LLRK…KLPE) and 78-87 (KTPEFKEPQK). Disordered stretches follow at residues 51–101 (LLRK…EPPA), 152–173 (EPKN…APEY), and 397–421 (DPNP…ENQP). Residues 443–462 (RLCLYCGYPGHFARDCPVKP) form a CCHC-type zinc finger.

The protein resides in the nucleus. Its function is as follows. May function as a transcriptional regulator. Plays a role in postnatal myogenesis, may be involved in the regulation of satellite cells self-renewal. This Homo sapiens (Human) protein is Retrotransposon Gag-like protein 3.